The following is a 289-amino-acid chain: SAGA-associated factor 29kDa (289 aa).

The stretch at 9 to 36 (AQQIQDRLKDIQQNIHNVDEERRRAENS) forms a coiled coil. The region spanning 137–278 (GNYVAKVGDN…VIAYRPTKKG (142 aa)) is the SGF29 C-terminal domain. Histone H3K4me3 N-terminus binding regions lie at residues 179 to 181 (DID) and 225 to 228 (QTTC). Residues 249 to 251 (FED) form a histone H3K4me3 binding region.

It belongs to the SGF29 family. Component of the Spt-Ada-Gcn5 acetyltransferase (SAGA) complex consisting of wda/Taf5L, Saf6, Taf9, Taf10b, Taf12, Ada1, Spt3, Spt7, Spt20, Sf3b3, Sf3b5, Nipped-A/Tra1, a histone acetyltransferase (HAT) module made up of Gcn5, Ada2b (Isoform B), Ada3 and Sgf29, and a deubiquitinase (DUB) module made up of not/nonstop, Sgf11, Atxn7 and e(y)2. Component of the Chiffon histone acetyltransferase (CHAT) complex consisting of Ada3, Sgf29, Gcn5, chif/chiffon and Ada2b (Isoform A).

It localises to the nucleus. In terms of biological role, component of both the SAGA and CHAT histone acetyltransferase complexes, which both predominantly acetylate histone H3. This is SAGA-associated factor 29kDa from Drosophila melanogaster (Fruit fly).